A 224-amino-acid chain; its full sequence is Oxalate oxidase GF-2.8 (224 aa).

Positions 1-23 are cleaved as a signal peptide; sequence MGYSKTLVAGLFAMLLLAPAVLA. The cysteines at positions 33 and 49 are disulfide-linked. Positions 63–214 constitute a Cupin type-1 domain; it reads SKLAKAGNTS…ALRVEARVVE (152 aa). N-linked (GlcNAc...) asparagine glycosylation is found at Asn70 and Asn75. Mn(2+) contacts are provided by His111, His113, Glu118, and His160.

The protein belongs to the germin family. Oligomer (believed to be a pentamer but probably hexamer).

It localises to the secreted. The protein localises to the extracellular space. The protein resides in the apoplast. It is found in the cytoplasm. Its subcellular location is the cell wall. It catalyses the reaction oxalate + O2 + 2 H(+) = H2O2 + 2 CO2. Functionally, produces developmental and stress-related release of hydrogen peroxide in the apoplast. May play an important role in several aspects of plant growth and defense mechanisms. This Triticum aestivum (Wheat) protein is Oxalate oxidase GF-2.8.